Consider the following 486-residue polypeptide: MNYLPIFVDLKNRPVLVVGGGHVAVRKIYALLKADALVKVVAEKLHSSLQILVNEGKVEWLAKAFEASQVTSSYLVIAATDDNALNQQVFDTAESQQRLVNVVDDQPRCSYIFPSIIDRSPVQIAISSGGAAPVLIRLLREKLEALIPHNLGAMADIATRWRSAVKTQFPQLTQRRRFWEKLFTHQSFQRLTENHQIEQAEALVESELQNNNPVLGEVSLVGAGPGDAGLLTLKGLQTIQQADVVLYDALVSEAVLELVRRDADKVFVGKRAGKHSVKQDDTNQLLVKYAKQGKRVVRLKGGDPFVFGRGGEELEILKAENIPFSVVPGITAALGATAYAGIPLTHRDHAQTAMFITGHLKPDGNRLKWETLAQGNQTLVVYMGTIKAAELSAELQKHGKPSDTPVAIISNGTLPNQQVQTGVLSELAELAEKAPTPALIVIGEVVKLQKDLAWFGKEAVQFVSTQETLWQKPTLQNKETHWKQAA.

The segment at 1–204 (MNYLPIFVDL…HQIEQAEALV (204 aa)) is precorrin-2 dehydrogenase /sirohydrochlorin ferrochelatase. Residues 22 to 23 (HV) and 43 to 44 (EK) each bind NAD(+). Ser128 bears the Phosphoserine mark. The uroporphyrinogen-III C-methyltransferase stretch occupies residues 216–486 (GEVSLVGAGP…NKETHWKQAA (271 aa)). Pro225 serves as a coordination point for S-adenosyl-L-methionine. Asp248 serves as the catalytic Proton acceptor. The Proton donor role is filled by Lys270. Residues 301-303 (GGD), Val306, 331-332 (TA), Met383, and Gly412 each bind S-adenosyl-L-methionine.

The protein in the N-terminal section; belongs to the precorrin-2 dehydrogenase / sirohydrochlorin ferrochelatase family. This sequence in the C-terminal section; belongs to the precorrin methyltransferase family.

The catalysed reaction is uroporphyrinogen III + 2 S-adenosyl-L-methionine = precorrin-2 + 2 S-adenosyl-L-homocysteine + H(+). It carries out the reaction precorrin-2 + NAD(+) = sirohydrochlorin + NADH + 2 H(+). The enzyme catalyses siroheme + 2 H(+) = sirohydrochlorin + Fe(2+). The protein operates within cofactor biosynthesis; adenosylcobalamin biosynthesis; precorrin-2 from uroporphyrinogen III: step 1/1. It participates in cofactor biosynthesis; adenosylcobalamin biosynthesis; sirohydrochlorin from precorrin-2: step 1/1. Its pathway is porphyrin-containing compound metabolism; siroheme biosynthesis; precorrin-2 from uroporphyrinogen III: step 1/1. It functions in the pathway porphyrin-containing compound metabolism; siroheme biosynthesis; siroheme from sirohydrochlorin: step 1/1. The protein operates within porphyrin-containing compound metabolism; siroheme biosynthesis; sirohydrochlorin from precorrin-2: step 1/1. Multifunctional enzyme that catalyzes the SAM-dependent methylations of uroporphyrinogen III at position C-2 and C-7 to form precorrin-2 via precorrin-1. Then it catalyzes the NAD-dependent ring dehydrogenation of precorrin-2 to yield sirohydrochlorin. Finally, it catalyzes the ferrochelation of sirohydrochlorin to yield siroheme. The protein is Siroheme synthase of Actinobacillus pleuropneumoniae serotype 7 (strain AP76).